Here is a 354-residue protein sequence, read N- to C-terminus: 5,10-methenyltetrahydromethanopterin hydrogenase (354 aa).

It belongs to the HMD family.

It carries out the reaction 5,10-methenyl-5,6,7,8-tetrahydromethanopterin + H2 = 5,10-methylenetetrahydromethanopterin + H(+). It participates in one-carbon metabolism; methanogenesis from CO(2); 5,10-methylene-5,6,7,8-tetrahydromethanopterin from 5,10-methenyl-5,6,7,8-tetrahydromethanopterin (hydrogen route): step 1/1. In terms of biological role, catalyzes the reversible reduction of methenyl-H(4)MPT(+) to methylene-H(4)MPT. This Methanococcus maripaludis (strain DSM 14266 / JCM 13030 / NBRC 101832 / S2 / LL) protein is 5,10-methenyltetrahydromethanopterin hydrogenase.